We begin with the raw amino-acid sequence, 276 residues long: Putative non-heme chloroperoxidase (276 aa).

The AB hydrolase-1 domain occupies 26 to 263 (PIVLIHGFPL…GGPHAINWTH (238 aa)). Catalysis depends on residues Ser-99, Asp-228, and His-257.

This sequence belongs to the AB hydrolase superfamily. Bacterial non-heme haloperoxidase / perhydrolase family.

The chain is Putative non-heme chloroperoxidase from Synechocystis sp. (strain ATCC 27184 / PCC 6803 / Kazusa).